A 677-amino-acid polypeptide reads, in one-letter code: Pentatricopeptide repeat-containing protein At5g39350 (677 aa).

16 PPR repeats span residues 48 to 78 (SGHI…MPQS), 79 to 113 (SLLS…GVKC), 116 to 146 (DGYT…ILRS), 151 to 181 (DKYV…MKNR), 182 to 216 (DVIS…SVDL), 217 to 251 (DHAT…RLGD), 252 to 282 (KIEV…MERR), 283 to 317 (DVIT…GVRP), 318 to 352 (NAVT…QVYS), 353 to 383 (DIII…ASKY), 384 to 418 (HTGP…DVEP), 419 to 453 (NIAT…GFMS), 454 to 488 (SLDA…HKSK), 489 to 523 (DVVL…GVTP), 524 to 554 (NEIT…MLEH), and 560 to 590 (RSNH…IPFE). The segment at 595-670 (VWGALLAACV…KPGHSTIEIR (76 aa)) is type E motif.

Belongs to the PPR family. PCMP-E subfamily.

This chain is Pentatricopeptide repeat-containing protein At5g39350 (PCMP-E16), found in Arabidopsis thaliana (Mouse-ear cress).